The sequence spans 123 residues: Putative outer membrane protein CPn_0818/CP_1053/CPj0818/CpB0847 (123 aa).

An N-terminal signal peptide occupies residues 1 to 30 (MKRQKRKQSITLIEMMVVITLIGIIGGALA).

It localises to the cell outer membrane. This chain is Putative outer membrane protein CPn_0818/CP_1053/CPj0818/CpB0847, found in Chlamydia pneumoniae (Chlamydophila pneumoniae).